Consider the following 406-residue polypeptide: Phosphoglycerate kinase (406 aa).

Residues 22-24, Arg37, 60-63, Arg119, and Arg152 contribute to the substrate site; these read DLN and HLGN. ATP is bound by residues Lys202, Glu325, and 355-358; that span reads GGDT.

This sequence belongs to the phosphoglycerate kinase family. In terms of assembly, monomer.

The protein resides in the cytoplasm. It catalyses the reaction (2R)-3-phosphoglycerate + ATP = (2R)-3-phospho-glyceroyl phosphate + ADP. It functions in the pathway carbohydrate degradation; glycolysis; pyruvate from D-glyceraldehyde 3-phosphate: step 2/5. The protein is Phosphoglycerate kinase of Orientia tsutsugamushi (strain Ikeda) (Rickettsia tsutsugamushi).